A 284-amino-acid chain; its full sequence is MAKYEPVIPELEVNPEGEVSKIAEFLRGKFEEAGREIAVVGLSGGVDSSTTLGLAVEALGRENVVALILPERDTPEEDVEDAVEAAERFGVEYHVHDITEVLRAFGTGSYVPCHPFSRKSDANLKPRVRMCVLYYFANELDGLVLGTGNRTEWLTGYFTLHGDGACDVAPIRHLYKTQVYVIAEHLGVPERIVEEKEPSARLWPGQTDEGELGIDYPTLDALLYALVDEGLGPRKAVDWLGERGVEATEEDAEKVLDLVRSSSFKRRPAPGLDLPEPEDPAMSG.

Residue 41–48 coordinates ATP; that stretch reads GLSGGVDS. A Mg(2+)-binding site is contributed by aspartate 47. A deamido-NAD(+)-binding site is contributed by arginine 127. Threonine 147 lines the ATP pocket. Mg(2+) is bound at residue glutamate 152. Position 167 (aspartate 167) interacts with deamido-NAD(+). ATP-binding residues include lysine 176 and serine 199. Residues 264-284 form a disordered region; that stretch reads FKRRPAPGLDLPEPEDPAMSG. The span at 275–284 shows a compositional bias: acidic residues; it reads PEPEDPAMSG.

Belongs to the NAD synthetase family. Homodimer.

The enzyme catalyses deamido-NAD(+) + NH4(+) + ATP = AMP + diphosphate + NAD(+) + H(+). It functions in the pathway cofactor biosynthesis; NAD(+) biosynthesis; NAD(+) from deamido-NAD(+) (ammonia route): step 1/1. Functionally, catalyzes the ATP-dependent amidation of deamido-NAD to form NAD. Uses ammonia as a nitrogen source. This is NH(3)-dependent NAD(+) synthetase from Methanopyrus kandleri (strain AV19 / DSM 6324 / JCM 9639 / NBRC 100938).